Consider the following 1020-residue polypeptide: 5'-3' exoribonuclease 3 (1020 aa).

Residues 113 to 144 form a disordered region; the sequence is QQRSRRFRSAKDASDAAAEEERLREEFEREGR. A compositionally biased stretch (basic and acidic residues) spans 121 to 144; that stretch reads SAKDASDAAAEEERLREEFEREGR. The segment at 262 to 279 adopts a CCHC-type zinc-finger fold; the sequence is ERCFLCGQMGHFASNCEG. Disordered regions lie at residues 411-440 and 452-483; these read QHQRQAERVKRDKAGKATKRMDDEAPTVQP and RLASAPTPSPFQSNDGRSAPHQKVRRLSPGSS. A compositionally biased stretch (basic and acidic residues) spans 414–433; the sequence is RQAERVKRDKAGKATKRMDD. Residues 487–523 adopt a coiled-coil conformation; the sequence is AIVDVENSLESDERENKEELKTKLKELIREKSDAFNS. The span at 831–844 shows a compositional bias: low complexity; it reads NNHGMHNNHGMHNN. 3 disordered regions span residues 831–859, 875–897, and 911–1020; these read NNHGMHNNHGMHNNQGRQNPPGSVSGRHL, TDRYQTPTDVPAPGYGYNPPQYV, and PGAQ…RHRY. Composition is skewed to low complexity over residues 911–923 and 960–972; these read PGAQGYAQPAPYQ and GNHQNQHQQQQWH. Basic residues predominate over residues 1000 to 1020; the sequence is RGRGRGSHHHHDQGGNPRHRY.

This sequence belongs to the 5'-3' exonuclease family. XRN2/RAT1 subfamily. Expressed in roots, leaves, stems and flowers.

It is found in the nucleus. Possesses 5'-&gt;3' exoribonuclease activity. Acts as an endogenous post-transcriptional gene silencing (PTGS) suppressor. Degrades miRNA-derived loops, excised during miRNA maturation in the nucleus. Required for proper development. Involved in pre-rRNA processing. Involved with XRN2 in the 5'-end exonucleolytic processing of 5.8S and 25S rRNAs. Contributes with XRN2 to polyadenylation-dependent nuclear RNA surveillance. Involved in the degradation of aberrant polyadenylated pre-rRNA through 5'-end processing. This chain is 5'-3' exoribonuclease 3, found in Arabidopsis thaliana (Mouse-ear cress).